Reading from the N-terminus, the 448-residue chain is Tubulin beta chain (448 aa).

Positions 11, 69, 138, 142, 143, 144, 204, and 226 each coordinate GTP. Glu-69 is a binding site for Mg(2+). Residues 429 to 448 (SISDGEEQPYAEEAAYEAEE) are disordered. Residues 432-448 (DGEEQPYAEEAAYEAEE) show a composition bias toward acidic residues.

It belongs to the tubulin family. Dimer of alpha and beta chains. A typical microtubule is a hollow water-filled tube with an outer diameter of 25 nm and an inner diameter of 15 nM. Alpha-beta heterodimers associate head-to-tail to form protofilaments running lengthwise along the microtubule wall with the beta-tubulin subunit facing the microtubule plus end conferring a structural polarity. Microtubules usually have 13 protofilaments but different protofilament numbers can be found in some organisms and specialized cells. The cofactor is Mg(2+).

It localises to the cytoplasm. The protein localises to the cytoskeleton. Its function is as follows. Tubulin is the major constituent of microtubules, a cylinder consisting of laterally associated linear protofilaments composed of alpha- and beta-tubulin heterodimers. Microtubules grow by the addition of GTP-tubulin dimers to the microtubule end, where a stabilizing cap forms. Below the cap, tubulin dimers are in GDP-bound state, owing to GTPase activity of alpha-tubulin. This chain is Tubulin beta chain, found in Aspergillus fumigatus (strain ATCC MYA-4609 / CBS 101355 / FGSC A1100 / Af293) (Neosartorya fumigata).